The chain runs to 455 residues: UDP-N-acetylmuramoylalanine--D-glutamate ligase (455 aa).

119 to 125 (GTNGKTT) serves as a coordination point for ATP.

This sequence belongs to the MurCDEF family.

The protein resides in the cytoplasm. The enzyme catalyses UDP-N-acetyl-alpha-D-muramoyl-L-alanine + D-glutamate + ATP = UDP-N-acetyl-alpha-D-muramoyl-L-alanyl-D-glutamate + ADP + phosphate + H(+). It participates in cell wall biogenesis; peptidoglycan biosynthesis. Its function is as follows. Cell wall formation. Catalyzes the addition of glutamate to the nucleotide precursor UDP-N-acetylmuramoyl-L-alanine (UMA). This chain is UDP-N-acetylmuramoylalanine--D-glutamate ligase, found in Listeria innocua serovar 6a (strain ATCC BAA-680 / CLIP 11262).